The chain runs to 578 residues: Arginine--tRNA ligase (578 aa).

Positions 127 to 137 (PNLAKEMHVGH) match the 'HIGH' region motif.

This sequence belongs to the class-I aminoacyl-tRNA synthetase family. As to quaternary structure, monomer.

The protein resides in the cytoplasm. It carries out the reaction tRNA(Arg) + L-arginine + ATP = L-arginyl-tRNA(Arg) + AMP + diphosphate. This is Arginine--tRNA ligase from Pseudomonas fluorescens (strain ATCC BAA-477 / NRRL B-23932 / Pf-5).